The chain runs to 389 residues: Putative F-box protein At1g47790 (389 aa).

Residues 19–65 enclose the F-box domain; sequence SKPTSSFPLDLASEILLRLPVKSVVRFRCVSKLWSSIITDPYFIKTY.

The protein is Putative F-box protein At1g47790 of Arabidopsis thaliana (Mouse-ear cress).